The sequence spans 723 residues: Peroxisomal bifunctional enzyme (723 aa).

The enoyl-CoA hydratase / isomerase stretch occupies residues 1 to 282; sequence MAEYTRLHNA…LAERKANKWS (282 aa). Lys-38 carries the post-translational modification N6-succinyllysine. A substrate-binding site is contributed by Gly-101. N6-acetyllysine; alternate is present on Lys-165. Lys-165 carries the N6-succinyllysine; alternate modification. An N6-acetyllysine modification is found at Lys-171. Lys-219 carries the N6-acetyllysine; alternate modification. Lys-219 carries the post-translational modification N6-succinyllysine; alternate. Lys-250 is subject to N6-acetyllysine. Lys-280 and Lys-290 each carry N6-succinyllysine. Residues 283 to 572 form a 3-hydroxyacyl-CoA dehydrogenase region; that stretch reads TPSGASWKTA…DVLCELGRFG (290 aa). N6-acetyllysine is present on residues Lys-346, Lys-350, and Lys-464. N6-succinyllysine is present on Lys-532. The residue at position 548 (Thr-548) is a Phosphothreonine. An N6-succinyllysine modification is found at Lys-577. An N6-acetyllysine; alternate mark is found at Lys-584, Lys-591, and Lys-710. Lys-584, Lys-591, and Lys-710 each carry N6-succinyllysine; alternate. Positions 699–723 are disordered; sequence KKLASQGNPPQKEWQSLAGSPSSKL. Over residues 703-723 the composition is skewed to polar residues; it reads SQGNPPQKEWQSLAGSPSSKL. The residue at position 718 (Ser-718) is a Phosphoserine. The Microbody targeting signal motif lies at 721–723; it reads SKL. The residue at position 722 (Lys-722) is an N6-succinyllysine.

It in the N-terminal section; belongs to the enoyl-CoA hydratase/isomerase family. This sequence in the C-terminal section; belongs to the 3-hydroxyacyl-CoA dehydrogenase family. As to quaternary structure, monomer. In terms of processing, acetylated, leading to enhanced enzyme activity. Acetylation is enhanced by up to 80% after treatment either with trichostin A (TSA) or with nicotinamide (NAM) with highest increase on Lys-346. Acetylation and enzyme activity increased by about 1.5% on addition of fatty acids.

It is found in the peroxisome. It catalyses the reaction a (3S)-3-hydroxyacyl-CoA = a (2E)-enoyl-CoA + H2O. The enzyme catalyses a 4-saturated-(3S)-3-hydroxyacyl-CoA = a (3E)-enoyl-CoA + H2O. The catalysed reaction is a (3Z)-enoyl-CoA = a 4-saturated (2E)-enoyl-CoA. It carries out the reaction a (3E)-enoyl-CoA = a 4-saturated (2E)-enoyl-CoA. It catalyses the reaction a (3S)-3-hydroxyacyl-CoA + NAD(+) = a 3-oxoacyl-CoA + NADH + H(+). The enzyme catalyses (2S,3S)-3-hydroxy-2-methylbutanoyl-CoA = (2E)-2-methylbut-2-enoyl-CoA + H2O. The catalysed reaction is (3S)-hydroxyhexadecanoyl-CoA + NAD(+) = 3-oxohexadecanoyl-CoA + NADH + H(+). It carries out the reaction (3S)-hydroxyhexadecanoyl-CoA = (2E)-hexadecenoyl-CoA + H2O. It catalyses the reaction (2E)-hexadecenedioyl-CoA + H2O = (3S)-hydroxyhexadecanedioyl-CoA. The enzyme catalyses (3S)-hydroxyhexadecanedioyl-CoA + NAD(+) = 3-oxohexadecanedioyl-CoA + NADH + H(+). The catalysed reaction is (3E,5Z)-tetradecadienoyl-CoA = (2E,5Z)-tetradecadienoyl-CoA. It carries out the reaction (3E,5Z)-octadienoyl-CoA = (2E,5Z)-octadienoyl-CoA. It catalyses the reaction (3S)-hydroxydecanoyl-CoA + NAD(+) = 3-oxodecanoyl-CoA + NADH + H(+). The enzyme catalyses (3E)-decenoyl-CoA = (2E)-decenoyl-CoA. The catalysed reaction is (3Z)-hexenoyl-CoA = (2E)-hexenoyl-CoA. It carries out the reaction (3E)-hexenoyl-CoA = (2E)-hexenoyl-CoA. It catalyses the reaction (3S)-hydroxydecanoyl-CoA = (2E)-decenoyl-CoA + H2O. The enzyme catalyses (3S)-hydroxyhexanoyl-CoA = (2E)-hexenoyl-CoA + H2O. It participates in lipid metabolism; fatty acid beta-oxidation. Enzyme activity enhanced by acetylation. Its function is as follows. Peroxisomal trifunctional enzyme possessing 2-enoyl-CoA hydratase, 3-hydroxyacyl-CoA dehydrogenase, and delta 3, delta 2-enoyl-CoA isomerase activities. Catalyzes two of the four reactions of the long chain fatty acids peroxisomal beta-oxidation pathway. Can also use branched-chain fatty acids such as 2-methyl-2E-butenoyl-CoA as a substrate, which is hydrated into (2S,3S)-3-hydroxy-2-methylbutanoyl-CoA. Optimal isomerase for 2,5 double bonds into 3,5 form isomerization in a range of enoyl-CoA species. Also able to isomerize both 3-cis and 3-trans double bonds into the 2-trans form in a range of enoyl-CoA species. Regulates the amount of medium-chain dicarboxylic fatty acids which are essential regulators of all fatty acid oxidation pathways. Also involved in the degradation of long-chain dicarboxylic acids through peroxisomal beta-oxidation. The chain is Peroxisomal bifunctional enzyme (EHHADH) from Pongo abelii (Sumatran orangutan).